A 1486-amino-acid polypeptide reads, in one-letter code: Chromosome partition protein MukB (1486 aa).

34 to 41 (GGNGAGKS) is an ATP binding site. Coiled-coil stretches lie at residues 326–418 (LEAD…QYNQ), 444–480 (LETFQAKELEATEKMLSLEQKMSMAQTAHSQFEQAYQ), and 509–603 (RHLA…RAPV). The segment at 666–783 (PGGSEDQRLN…EVPLFGRAAR (118 aa)) is flexible hinge. Coiled coils occupy residues 835–923 (EAEI…AKLE), 977–1115 (EMLS…TAKA), and 1209–1266 (VEAI…QNVS).

This sequence belongs to the SMC family. MukB subfamily. As to quaternary structure, homodimerization via its hinge domain. Binds to DNA via its C-terminal region. Interacts, and probably forms a ternary complex, with MukE and MukF via its C-terminal region. The complex formation is stimulated by calcium or magnesium. Interacts with tubulin-related protein FtsZ.

Its subcellular location is the cytoplasm. The protein localises to the nucleoid. Functionally, plays a central role in chromosome condensation, segregation and cell cycle progression. Functions as a homodimer, which is essential for chromosome partition. Involved in negative DNA supercoiling in vivo, and by this means organize and compact chromosomes. May achieve or facilitate chromosome segregation by condensation DNA from both sides of a centrally located replisome during cell division. In Escherichia coli O6:H1 (strain CFT073 / ATCC 700928 / UPEC), this protein is Chromosome partition protein MukB.